The sequence spans 227 residues: Small ribosomal subunit protein uS3 (227 aa).

The KH type-2 domain occupies 38–106 (LRKFIKDRFY…NVNINIQEIR (69 aa)).

This sequence belongs to the universal ribosomal protein uS3 family. In terms of assembly, part of the 30S ribosomal subunit. Forms a tight complex with proteins S10 and S14.

Binds the lower part of the 30S subunit head. Binds mRNA in the 70S ribosome, positioning it for translation. This chain is Small ribosomal subunit protein uS3, found in Syntrophomonas wolfei subsp. wolfei (strain DSM 2245B / Goettingen).